The primary structure comprises 209 residues: Uracil phosphoribosyltransferase (209 aa).

5-phospho-alpha-D-ribose 1-diphosphate is bound by residues Arg-78, Arg-103, and 130 to 138; that span reads DPMLATAGS. Uracil is bound by residues Ile-193 and 198-200; that span reads GDA. Asp-199 provides a ligand contact to 5-phospho-alpha-D-ribose 1-diphosphate.

The protein belongs to the UPRTase family. It depends on Mg(2+) as a cofactor.

It catalyses the reaction UMP + diphosphate = 5-phospho-alpha-D-ribose 1-diphosphate + uracil. Its pathway is pyrimidine metabolism; UMP biosynthesis via salvage pathway; UMP from uracil: step 1/1. Its activity is regulated as follows. Allosterically activated by GTP. Catalyzes the conversion of uracil and 5-phospho-alpha-D-ribose 1-diphosphate (PRPP) to UMP and diphosphate. The sequence is that of Uracil phosphoribosyltransferase from Methylibium petroleiphilum (strain ATCC BAA-1232 / LMG 22953 / PM1).